Consider the following 567-residue polypeptide: Urease subunit alpha (567 aa).

Residues 129 to 567 enclose the Urease domain; sequence GGIDAHIHFI…LPMAQRYFLF (439 aa). 3 residues coordinate Ni(2+): His-134, His-136, and Lys-217. Position 217 is an N6-carboxylysine (Lys-217). His-219 contacts substrate. Residues His-246 and His-272 each coordinate Ni(2+). The active-site Proton donor is the His-320. Asp-360 lines the Ni(2+) pocket.

The protein belongs to the metallo-dependent hydrolases superfamily. Urease alpha subunit family. Heterotrimer of UreA (gamma), UreB (beta) and UreC (alpha) subunits. Three heterotrimers associate to form the active enzyme. Requires Ni cation as cofactor. In terms of processing, carboxylation allows a single lysine to coordinate two nickel ions.

The protein localises to the cytoplasm. It catalyses the reaction urea + 2 H2O + H(+) = hydrogencarbonate + 2 NH4(+). The protein operates within nitrogen metabolism; urea degradation; CO(2) and NH(3) from urea (urease route): step 1/1. This is Urease subunit alpha from Teredinibacter turnerae (strain ATCC 39867 / T7901).